Here is a 476-residue protein sequence, read N- to C-terminus: Ribulose bisphosphate carboxylase large chain (476 aa).

Substrate-binding residues include N124 and T174. The Proton acceptor role is filled by K176. K178 is a binding site for substrate. Positions 202, 204, and 205 each coordinate Mg(2+). K202 carries the N6-carboxylysine modification. H295 (proton acceptor) is an active-site residue. Substrate-binding residues include R296, H328, and S380.

It belongs to the RuBisCO large chain family. Type I subfamily. Heterohexadecamer of 8 large chains and 8 small chains; disulfide-linked. The disulfide link is formed within the large subunit homodimers. Requires Mg(2+) as cofactor. The disulfide bond which can form in the large chain dimeric partners within the hexadecamer appears to be associated with oxidative stress and protein turnover.

Its subcellular location is the carboxysome. The enzyme catalyses 2 (2R)-3-phosphoglycerate + 2 H(+) = D-ribulose 1,5-bisphosphate + CO2 + H2O. It carries out the reaction D-ribulose 1,5-bisphosphate + O2 = 2-phosphoglycolate + (2R)-3-phosphoglycerate + 2 H(+). Its function is as follows. RuBisCO catalyzes two reactions: the carboxylation of D-ribulose 1,5-bisphosphate, the primary event in carbon dioxide fixation, as well as the oxidative fragmentation of the pentose substrate in the photorespiration process. Both reactions occur simultaneously and in competition at the same active site. This Acaryochloris marina (strain MBIC 11017) protein is Ribulose bisphosphate carboxylase large chain.